We begin with the raw amino-acid sequence, 75 residues long: MPQLSRYSDEHVEQLLSELLSVLEKHKAPTDLSLMVLGNMVTNLINTSVAPAQRQAIANSFARALQSSISEDNAH.

Belongs to the UPF0352 family.

The chain is UPF0352 protein YejL from Salmonella agona (strain SL483).